We begin with the raw amino-acid sequence, 182 residues long: ATP synthase subunit delta (182 aa).

This sequence belongs to the ATPase delta chain family. F-type ATPases have 2 components, F(1) - the catalytic core - and F(0) - the membrane proton channel. F(1) has five subunits: alpha(3), beta(3), gamma(1), delta(1), epsilon(1). CF(0) has four main subunits: a(1), b(1), b'(1) and c(10-14). The alpha and beta chains form an alternating ring which encloses part of the gamma chain. F(1) is attached to F(0) by a central stalk formed by the gamma and epsilon chains, while a peripheral stalk is formed by the delta, b and b' chains.

The protein localises to the cellular thylakoid membrane. F(1)F(0) ATP synthase produces ATP from ADP in the presence of a proton or sodium gradient. F-type ATPases consist of two structural domains, F(1) containing the extramembraneous catalytic core and F(0) containing the membrane proton channel, linked together by a central stalk and a peripheral stalk. During catalysis, ATP synthesis in the catalytic domain of F(1) is coupled via a rotary mechanism of the central stalk subunits to proton translocation. In terms of biological role, this protein is part of the stalk that links CF(0) to CF(1). It either transmits conformational changes from CF(0) to CF(1) or is implicated in proton conduction. The chain is ATP synthase subunit delta from Synechococcus sp. (strain WH7803).